Reading from the N-terminus, the 229-residue chain is ATP-dependent dethiobiotin synthetase BioD (229 aa).

12 to 17 (GVGKTV) contributes to the ATP binding site. T16 lines the Mg(2+) pocket. K37 is a catalytic residue. T41 provides a ligand contact to substrate. ATP is bound by residues D53, 112–115 (EGAG), and 201–203 (PAG). Mg(2+)-binding residues include D53 and E112.

It belongs to the dethiobiotin synthetase family. Homodimer. Requires Mg(2+) as cofactor.

The protein resides in the cytoplasm. It carries out the reaction (7R,8S)-7,8-diammoniononanoate + CO2 + ATP = (4R,5S)-dethiobiotin + ADP + phosphate + 3 H(+). Its pathway is cofactor biosynthesis; biotin biosynthesis; biotin from 7,8-diaminononanoate: step 1/2. Its function is as follows. Catalyzes a mechanistically unusual reaction, the ATP-dependent insertion of CO2 between the N7 and N8 nitrogen atoms of 7,8-diaminopelargonic acid (DAPA, also called 7,8-diammoniononanoate) to form a ureido ring. In Mycobacterium sp. (strain KMS), this protein is ATP-dependent dethiobiotin synthetase BioD.